The chain runs to 127 residues: Small ribosomal subunit protein uS13 (127 aa).

The span at 96–118 (LPVRGQRTHTNARTRKGPKRGIV) shows a compositional bias: basic residues. The segment at 96 to 127 (LPVRGQRTHTNARTRKGPKRGIVRAKPAAPAR) is disordered.

This sequence belongs to the universal ribosomal protein uS13 family. As to quaternary structure, part of the 30S ribosomal subunit. Forms a loose heterodimer with protein S19. Forms two bridges to the 50S subunit in the 70S ribosome.

Its function is as follows. Located at the top of the head of the 30S subunit, it contacts several helices of the 16S rRNA. In the 70S ribosome it contacts the 23S rRNA (bridge B1a) and protein L5 of the 50S subunit (bridge B1b), connecting the 2 subunits; these bridges are implicated in subunit movement. Contacts the tRNAs in the A and P-sites. This chain is Small ribosomal subunit protein uS13, found in Myxococcus xanthus (strain DK1622).